The primary structure comprises 590 residues: Cyclin-dependent kinase-like 3 (590 aa).

Positions 4–286 (YETLGKVGEG…SSDLLHHEYF (283 aa)) constitute a Protein kinase domain. Residues 10–18 (VGEGSYGTV) and Lys33 each bind ATP. The [NKR]KIAxRE signature appears at 45-51 (KIAMREI). The Proton acceptor role is filled by Asp125. Thr158 carries the post-translational modification Phosphothreonine. Tyr160 is modified (phosphotyrosine). Disordered stretches follow at residues 459–508 (RAKK…SNEN) and 547–590 (LKRE…PDVE). Over residues 466-477 (SSQSIGQVMPNS) the composition is skewed to polar residues. Basic and acidic residues-rich tracts occupy residues 547-556 (LKRESKKTDS) and 580-590 (TERKKNLPDVE).

The protein belongs to the protein kinase superfamily. CMGC Ser/Thr protein kinase family. CDC2/CDKX subfamily.

It is found in the cytoplasm. It carries out the reaction L-seryl-[protein] + ATP = O-phospho-L-seryl-[protein] + ADP + H(+). The catalysed reaction is L-threonyl-[protein] + ATP = O-phospho-L-threonyl-[protein] + ADP + H(+). The chain is Cyclin-dependent kinase-like 3 from Macaca fascicularis (Crab-eating macaque).